Here is a 124-residue protein sequence, read N- to C-terminus: Aspartate 1-decarboxylase (124 aa).

Residue Ser25 is the Schiff-base intermediate with substrate; via pyruvic acid of the active site. Ser25 bears the Pyruvic acid (Ser) mark. Thr57 contacts substrate. Catalysis depends on Tyr58, which acts as the Proton donor. 73–75 (GAA) contacts substrate.

The protein belongs to the PanD family. Heterooctamer of four alpha and four beta subunits. The cofactor is pyruvate. Is synthesized initially as an inactive proenzyme, which is activated by self-cleavage at a specific serine bond to produce a beta-subunit with a hydroxyl group at its C-terminus and an alpha-subunit with a pyruvoyl group at its N-terminus.

The protein localises to the cytoplasm. The enzyme catalyses L-aspartate + H(+) = beta-alanine + CO2. It participates in cofactor biosynthesis; (R)-pantothenate biosynthesis; beta-alanine from L-aspartate: step 1/1. In terms of biological role, catalyzes the pyruvoyl-dependent decarboxylation of aspartate to produce beta-alanine. In Syntrophobacter fumaroxidans (strain DSM 10017 / MPOB), this protein is Aspartate 1-decarboxylase.